The chain runs to 227 residues: ATP-dependent dethiobiotin synthetase BioD (227 aa).

13–18 (DVGKTV) lines the ATP pocket. Threonine 17 serves as a coordination point for Mg(2+). The active site involves lysine 38. ATP contacts are provided by residues aspartate 55, 116-119 (EGAG), 176-177 (NR), and 205-207 (PYI). Mg(2+)-binding residues include aspartate 55 and glutamate 116.

The protein belongs to the dethiobiotin synthetase family. In terms of assembly, homodimer. It depends on Mg(2+) as a cofactor.

Its subcellular location is the cytoplasm. It catalyses the reaction (7R,8S)-7,8-diammoniononanoate + CO2 + ATP = (4R,5S)-dethiobiotin + ADP + phosphate + 3 H(+). It functions in the pathway cofactor biosynthesis; biotin biosynthesis; biotin from 7,8-diaminononanoate: step 1/2. Functionally, catalyzes a mechanistically unusual reaction, the ATP-dependent insertion of CO2 between the N7 and N8 nitrogen atoms of 7,8-diaminopelargonic acid (DAPA, also called 7,8-diammoniononanoate) to form a ureido ring. This Vibrio vulnificus (strain CMCP6) protein is ATP-dependent dethiobiotin synthetase BioD.